Reading from the N-terminus, the 363-residue chain is Mitogen-activated protein kinase 12 (363 aa).

The Protein kinase domain occupies 25-309 (YKDLKQVGTG…AAEALAFPFF (285 aa)). ATP contacts are provided by residues 31-39 (VGTGAYGTV) and K54. The Proton acceptor role is filled by D151. Position 181 is a phosphothreonine (T181). The short motif at 181 to 183 (TGY) is the TXY element. Y183 carries the post-translational modification Phosphotyrosine.

The protein belongs to the protein kinase superfamily. CMGC Ser/Thr protein kinase family. MAP kinase subfamily. Mg(2+) is required as a cofactor. Post-translationally, dually phosphorylated on Thr-181 and Tyr-183, which activates the enzyme.

It is found in the cytoplasm. The enzyme catalyses L-seryl-[protein] + ATP = O-phospho-L-seryl-[protein] + ADP + H(+). It carries out the reaction L-threonyl-[protein] + ATP = O-phospho-L-threonyl-[protein] + ADP + H(+). Its activity is regulated as follows. Activated by threonine and tyrosine phosphorylation. In terms of biological role, serine/threonine kinase which acts as an essential component of the MAP kinase signal transduction pathway. MAPK12 is one of the four p38 MAPKs which play an important role in the cascades of cellular responses evoked by extracellular stimuli such as pro-inflammatory cytokines or physical stress leading to direct activation of transcription factors. Accordingly, p38 MAPKs phosphorylate a broad range of proteins and it has been estimated that they may have approximately 200 to 300 substrates each. Some of the targets are downstream kinases such as MAPKAPK2, which are activated through phosphorylation and further phosphorylate additional targets. This chain is Mitogen-activated protein kinase 12 (mapk12), found in Danio rerio (Zebrafish).